The sequence spans 113 residues: Large ribosomal subunit protein P2B (113 aa).

Residues P66 to D113 form a disordered region. Residues E89–E99 are compositionally biased toward basic and acidic residues.

This sequence belongs to the eukaryotic ribosomal protein P1/P2 family. As to quaternary structure, P1 and P2 exist as dimers at the large ribosomal subunit. Phosphorylated.

Functionally, plays an important role in the elongation step of protein synthesis. The chain is Large ribosomal subunit protein P2B (RPP2B) from Zea mays (Maize).